The chain runs to 419 residues: E3 ubiquitin-protein ligase RNFT1 (419 aa).

A disordered region spans residues 1-120; that stretch reads MKLRAQFDRG…SGESDLESGE (120 aa). Composition is skewed to polar residues over residues 31-44 and 72-82; these read EPSS…SLTL and GSSSGSTNGRG. Residues 84–102 are compositionally biased toward basic residues; the sequence is TSRRMRTASHSHSHTHGHG. The next 6 membrane-spanning stretches (helical) occupy residues 141–161, 187–207, 217–237, 240–260, 270–290, and 303–323; these read FIVI…AVAV, LHCA…FYTF, FFAN…SVGV, FILK…PCPL, YMLI…PLWF, and VGLT…LLAL. The tract at residues 352–403 is required for ubiquitin ligase activity and for protection against ER stress-induced cell death; the sequence is IREAGDICPICQADFKQPRVLVCQHIFCEECIAQWLNQERTCPLCRTVITDK. An RING-type zinc finger spans residues 359–397; it reads CPICQADFKQPRVLVCQHIFCEECIAQWLNQERTCPLCR.

The protein resides in the endoplasmic reticulum membrane. The enzyme catalyses S-ubiquitinyl-[E2 ubiquitin-conjugating enzyme]-L-cysteine + [acceptor protein]-L-lysine = [E2 ubiquitin-conjugating enzyme]-L-cysteine + N(6)-ubiquitinyl-[acceptor protein]-L-lysine.. It functions in the pathway protein modification; protein ubiquitination. E3 ubiquitin-protein ligase that acts in the endoplasmic reticulum (ER)-associated degradation (ERAD) pathway, which targets misfolded proteins that accumulate in the endoplasmic reticulum (ER) for ubiquitination and subsequent proteasome-mediated degradation. Protects cells from ER stress-induced apoptosis. The sequence is that of E3 ubiquitin-protein ligase RNFT1 (rnft1) from Danio rerio (Zebrafish).